We begin with the raw amino-acid sequence, 474 residues long: Adenosylhomocysteinase (474 aa).

Substrate is bound by residues Thr-53, Asp-135, and Glu-197. 198–200 (TTT) serves as a coordination point for NAD(+). The substrate site is built by Lys-227 and Asp-231. NAD(+)-binding positions include Asn-232, 261–266 (GYGDVG), Glu-284, Asn-319, 340–342 (IGH), and Asn-388.

Belongs to the adenosylhomocysteinase family. Requires NAD(+) as cofactor.

The protein localises to the cytoplasm. The catalysed reaction is S-adenosyl-L-homocysteine + H2O = L-homocysteine + adenosine. It participates in amino-acid biosynthesis; L-homocysteine biosynthesis; L-homocysteine from S-adenosyl-L-homocysteine: step 1/1. Its function is as follows. May play a key role in the regulation of the intracellular concentration of adenosylhomocysteine. This Corynebacterium glutamicum (strain ATCC 13032 / DSM 20300 / JCM 1318 / BCRC 11384 / CCUG 27702 / LMG 3730 / NBRC 12168 / NCIMB 10025 / NRRL B-2784 / 534) protein is Adenosylhomocysteinase.